The chain runs to 389 residues: Inner membrane transport protein YdhP (389 aa).

The Cytoplasmic segment spans residues 1 to 6 (MKINYP). A helical transmembrane segment spans residues 7–27 (LLALAIGAFGIGTTEFSPMGL). The Periplasmic portion of the chain corresponds to 28 to 43 (LPVIARGVDVSIPAAG). A helical membrane pass occupies residues 44 to 64 (MLISAYAVGVMVGAPLMTLLL). The Cytoplasmic segment spans residues 65 to 70 (SHRARR). A helical transmembrane segment spans residues 71-91 (SALIFLMAIFTLGNVLSAIAP). Residues 92-100 (DYMTLMLSR) are Periplasmic-facing. Residues 101–121 (ILTSLNHGAFFGLGSVVAASV) form a helical membrane-spanning segment. The Cytoplasmic segment spans residues 122–130 (VPKHKQASA). Residues 131–151 (VATMFMGLTLANIGGVPAATW) traverse the membrane as a helical segment. Residues 152–159 (LGETIGWR) are Periplasmic-facing. Residues 160 to 180 (MSFLATAGLGVISMVSLFFSL) traverse the membrane as a helical segment. At 181–203 (PKGGAGARPEVKKELAVLMRPQV) the chain is on the cytoplasmic side. A helical membrane pass occupies residues 204 to 224 (LSALLTTVLGAGAMFTLYTYI). Topologically, residues 225–236 (SPVLQSITHATP) are periplasmic. A helical transmembrane segment spans residues 237-257 (VFVTAMLVLIGVGFSIGNYLG). The Cytoplasmic segment spans residues 258 to 266 (GKLADRSVN). The chain crosses the membrane as a helical span at residues 267–287 (GTLKGFLLLLMVIMLAIPFLA). Residues 288–290 (RNK) are Periplasmic-facing. A helical membrane pass occupies residues 291–311 (FGAAISMAVWGAATFAVVPPL). Residues 312-330 (QMRVMRVASEAPGLSSSVN) lie on the Cytoplasmic side of the membrane. The chain crosses the membrane as a helical span at residues 331–351 (IGAFNLGNALGAAAGGAVISA). Residues 352-356 (GLGYS) are Periplasmic-facing. Residues 357 to 377 (FVPVMGAIVAGLALLLVFMSA) form a helical membrane-spanning segment. The Cytoplasmic portion of the chain corresponds to 378–389 (RKQPETVCVANS).

Belongs to the major facilitator superfamily.

The protein resides in the cell inner membrane. This Escherichia coli O157:H7 protein is Inner membrane transport protein YdhP (ydhP).